Consider the following 453-residue polypeptide: tRNA modification GTPase MnmE (453 aa).

Positions 22, 79, and 119 each coordinate (6S)-5-formyl-5,6,7,8-tetrahydrofolate. One can recognise a TrmE-type G domain in the interval 215–376 (GMKVVIAGRP…LREHLKACMG (162 aa)). Asn-225 provides a ligand contact to K(+). GTP-binding positions include 225-230 (NAGKSS), 244-250 (TEIAGTT), 269-272 (DTAG), and 334-337 (NKAD). Ser-229 provides a ligand contact to Mg(2+). 3 residues coordinate K(+): Thr-244, Ile-246, and Thr-249. Thr-250 is a Mg(2+) binding site. Lys-453 lines the (6S)-5-formyl-5,6,7,8-tetrahydrofolate pocket.

Belongs to the TRAFAC class TrmE-Era-EngA-EngB-Septin-like GTPase superfamily. TrmE GTPase family. Homodimer. Heterotetramer of two MnmE and two MnmG subunits. K(+) serves as cofactor.

The protein localises to the cytoplasm. Its function is as follows. Exhibits a very high intrinsic GTPase hydrolysis rate. Involved in the addition of a carboxymethylaminomethyl (cmnm) group at the wobble position (U34) of certain tRNAs, forming tRNA-cmnm(5)s(2)U34. The chain is tRNA modification GTPase MnmE from Aeromonas salmonicida (strain A449).